Here is a 601-residue protein sequence, read N- to C-terminus: Keratin, type II cytoskeletal 5 (601 aa).

The segment at 1–168 (MSRQSTVSFR…DPTIQRVRTE (168 aa)) is head. Ser5, Ser8, Ser16, and Ser21 each carry phosphoserine. Residue Thr24 is modified to Phosphothreonine; by CDK1. Phosphoserine occurs at positions 26, 36, 50, 64, 71, and 75. Thr152 carries the post-translational modification Phosphothreonine; by CDK1. At Thr167 the chain carries Phosphothreonine; by AURKB. A coil 1A region spans residues 169–204 (EREQIKTLNNKFASFIDKVRFLEQQNKVLDTKWALL). Positions 169–482 (EREQIKTLNN…KLLEGEECRL (314 aa)) constitute an IF rod domain. The linker 1 stretch occupies residues 205-223 (QEQGTKTVRQNLEPLLEQY). The tract at residues 224–316 (INNLRRQLDG…FFDAELSQMQ (93 aa)) is coil 1B. The tract at residues 317 to 339 (THVSDTSVVLSMDNNRSLDLDSI) is linker 12. The tract at residues 340 to 478 (IAEVKAQYED…ATYRKLLEGE (139 aa)) is coil 2. Positions 479 to 601 (ECRLSGEGVG…TSSSRKSFKS (123 aa)) are tail. The disordered stretch occupies residues 576-601 (FGSGGGSSSSVKFVSTTSSSRKSFKS). Positions 583 to 601 (SSSVKFVSTTSSSRKSFKS) are enriched in low complexity.

This sequence belongs to the intermediate filament family. Heterodimer of a type I and a type II keratin. Heterodimer with type I keratin KRT25 leading to the formation of keratin intermediate filament (KIF) network. Forms a heterodimer (via 2B domains) with KRT14 (via 2B domains). Interacts with TCHP. Interacts with EPPK1. Interacts with AMELX. Interacts with PKP1 (via N-terminus) and PKP2. Post-translationally, phosphorylated by CDK1, AURKB and Rho-kinase, phosphorylation is regulated by the cell cycle. Thr-24 phosphorylation, mediated by CDK1, peaks during prometaphase or metaphase cells with phosphorylated filamentous structures evident throughout the cytoplasm early mitosis. CDK1 phosphorylates Thr-24 in mitotic cells at the site of injury. In terms of processing, O-glycosylated.

It localises to the cytoplasm. Its function is as follows. Required for the formation of keratin intermediate filaments in the basal epidermis and maintenance of the skin barrier in response to mechanical stress. Regulates the recruitment of Langerhans cells to the epidermis, potentially by modulation of the abundance of macrophage chemotactic cytokines, macrophage inflammatory cytokines and CTNND1 localization in keratinocytes. The sequence is that of Keratin, type II cytoskeletal 5 from Bos taurus (Bovine).